A 412-amino-acid chain; its full sequence is Argininosuccinate synthase (412 aa).

10–18 (AYSGGLDTS) lines the ATP pocket. Position 89 (Tyr89) interacts with L-citrulline. Gly119 is an ATP binding site. Positions 121, 125, and 126 each coordinate L-aspartate. Asn125 lines the L-citrulline pocket. Arg129, Ser177, Glu261, and Tyr273 together coordinate L-citrulline.

It belongs to the argininosuccinate synthase family. Type 1 subfamily. As to quaternary structure, homotetramer.

The protein resides in the cytoplasm. The enzyme catalyses L-citrulline + L-aspartate + ATP = 2-(N(omega)-L-arginino)succinate + AMP + diphosphate + H(+). It participates in amino-acid biosynthesis; L-arginine biosynthesis; L-arginine from L-ornithine and carbamoyl phosphate: step 2/3. In Bifidobacterium longum (strain DJO10A), this protein is Argininosuccinate synthase.